The sequence spans 1863 residues: 5'-3' DNA helicase ZGRF1 (1863 aa).

Disordered stretches follow at residues 78-110 (SRAV…QPSG), 132-196 (ENSE…PLSL), and 300-349 (TQSI…PEAQ). The span at 81–90 (VEPDGSREAL) shows a compositional bias: basic and acidic residues. Residues 92 to 105 (SGSRTLVSSSRSLG) show a composition bias toward low complexity. Polar residues-rich tracts occupy residues 173–185 (PVST…ITFS) and 300–321 (TQSI…TTSR). Ser-331 and Ser-445 each carry phosphoserine. Disordered regions lie at residues 460 to 496 (PVSP…SKSN), 524 to 545 (TSDT…ERWE), and 610 to 664 (GDVK…GVSP). Basic and acidic residues predominate over residues 533–545 (EDSRLSQDSERWE). Residues Cys-1111, His-1113, Cys-1136, and Cys-1144 each coordinate Zn(2+). The segment at 1111-1153 (CHHNQPAKLVMVKKEGPNKGRLFYTCDKSKDNQCKFFKWLEEV) adopts a GRF-type zinc-finger fold.

Interacts with DNA repair protein RAD51; the interaction promotes RAD51 strand exchange activity. Also interacts with DNA repair proteins EXO1 and BRCA1; the interactions are increased following DNA damage induction.

The protein localises to the nucleus. The enzyme catalyses ATP + H2O = ADP + phosphate + H(+). It carries out the reaction Couples ATP hydrolysis with the unwinding of duplex DNA at the replication fork by translocating in the 5'-3' direction. This creates two antiparallel DNA single strands (ssDNA). The leading ssDNA polymer is the template for DNA polymerase III holoenzyme which synthesizes a continuous strand.. Its function is as follows. 5'-3' DNA helicase which is recruited to sites of DNA damage and promotes repair of replication-blocking DNA lesions through stimulation of homologous recombination (HR). Promotes HR by directly stimulating RAD51-mediated strand exchange activity. Not required to load RAD51 at sites of DNA damage but promotes recombinational repair after RAD51 recruitment. Also promotes HR by positively regulating EXO1-mediated DNA end resection of DNA double-strand breaks. Required for recruitment of replication protein RPA2 to DNA damage sites. Promotes the initiation of the G2/M checkpoint but not its maintenance. Catalyzes Holliday junction branch migration and dissociation of D-loops and DNA flaps. This Mus musculus (Mouse) protein is 5'-3' DNA helicase ZGRF1 (Zgrf1).